Reading from the N-terminus, the 494-residue chain is UDP-N-acetylmuramoyl-L-alanyl-D-glutamate--L-lysine ligase (494 aa).

Serine 30 serves as a coordination point for UDP-N-acetyl-alpha-D-muramoyl-L-alanyl-D-glutamate. Residue 110–116 (GTNGKTS) participates in ATP binding. UDP-N-acetyl-alpha-D-muramoyl-L-alanyl-D-glutamate is bound by residues 152 to 153 (TT), serine 179, and arginine 187. N6-carboxylysine is present on lysine 219. The L-lysine recognition motif signature appears at 406–409 (DNPA).

Belongs to the MurCDEF family. MurE subfamily. Post-translationally, carboxylation is probably crucial for Mg(2+) binding and, consequently, for the gamma-phosphate positioning of ATP.

The protein localises to the cytoplasm. The catalysed reaction is UDP-N-acetyl-alpha-D-muramoyl-L-alanyl-D-glutamate + L-lysine + ATP = UDP-N-acetyl-alpha-D-muramoyl-L-alanyl-gamma-D-glutamyl-L-lysine + ADP + phosphate + H(+). It participates in cell wall biogenesis; peptidoglycan biosynthesis. Catalyzes the addition of L-lysine to the nucleotide precursor UDP-N-acetylmuramoyl-L-alanyl-D-glutamate (UMAG) in the biosynthesis of bacterial cell-wall peptidoglycan. The chain is UDP-N-acetylmuramoyl-L-alanyl-D-glutamate--L-lysine ligase from Staphylococcus aureus (strain MW2).